Here is a 494-residue protein sequence, read N- to C-terminus: Putative myristoylated protein 006R (494 aa).

A lipid anchor (N-myristoyl glycine; by host) is attached at Gly2. The next 3 helical transmembrane spans lie at Val193–Ala213, Val214–Trp234, and Trp465–Phe485.

The protein belongs to the IIV-6 118L/458R family.

The protein resides in the membrane. This is Putative myristoylated protein 006R from Aedes vexans (Inland floodwater mosquito).